The chain runs to 198 residues: V-type ATP synthase subunit E (198 aa).

The protein belongs to the V-ATPase E subunit family.

In terms of biological role, produces ATP from ADP in the presence of a proton gradient across the membrane. In Clostridium perfringens (strain SM101 / Type A), this protein is V-type ATP synthase subunit E.